Consider the following 432-residue polypeptide: Glutamate-1-semialdehyde 2,1-aminomutase (432 aa).

An N6-(pyridoxal phosphate)lysine modification is found at lysine 272.

This sequence belongs to the class-III pyridoxal-phosphate-dependent aminotransferase family. HemL subfamily. In terms of assembly, homodimer. Pyridoxal 5'-phosphate serves as cofactor.

Its subcellular location is the cytoplasm. The enzyme catalyses (S)-4-amino-5-oxopentanoate = 5-aminolevulinate. It functions in the pathway porphyrin-containing compound metabolism; protoporphyrin-IX biosynthesis; 5-aminolevulinate from L-glutamyl-tRNA(Glu): step 2/2. Its pathway is porphyrin-containing compound metabolism; chlorophyll biosynthesis. The protein is Glutamate-1-semialdehyde 2,1-aminomutase of Nostoc sp. (strain PCC 7120 / SAG 25.82 / UTEX 2576).